The following is a 352-amino-acid chain: UDP-3-O-acylglucosamine N-acyltransferase (352 aa).

Catalysis depends on H257, which acts as the Proton acceptor.

The protein belongs to the transferase hexapeptide repeat family. LpxD subfamily. In terms of assembly, homotrimer.

The enzyme catalyses a UDP-3-O-[(3R)-3-hydroxyacyl]-alpha-D-glucosamine + a (3R)-hydroxyacyl-[ACP] = a UDP-2-N,3-O-bis[(3R)-3-hydroxyacyl]-alpha-D-glucosamine + holo-[ACP] + H(+). It functions in the pathway bacterial outer membrane biogenesis; LPS lipid A biosynthesis. Its function is as follows. Catalyzes the N-acylation of UDP-3-O-acylglucosamine using 3-hydroxyacyl-ACP as the acyl donor. Is involved in the biosynthesis of lipid A, a phosphorylated glycolipid that anchors the lipopolysaccharide to the outer membrane of the cell. This is UDP-3-O-acylglucosamine N-acyltransferase from Methylobacterium sp. (strain 4-46).